The primary structure comprises 397 residues: Elongation factor Tu (397 aa).

Residues 10 to 207 enclose the tr-type G domain; sequence LPHVNVGTIG…TLDSYIPEPV (198 aa). The tract at residues 19-26 is G1; sequence GHVDHGKT. 19–26 is a GTP binding site; it reads GHVDHGKT. T26 contacts Mg(2+). The segment at 60–64 is G2; that stretch reads GITIN. The tract at residues 81–84 is G3; sequence DCPG. Residues 81 to 85 and 136 to 139 each bind GTP; these read DCPGH and NKAD. The segment at 136–139 is G4; the sequence is NKAD. The G5 stretch occupies residues 174 to 176; it reads SAR.

This sequence belongs to the TRAFAC class translation factor GTPase superfamily. Classic translation factor GTPase family. EF-Tu/EF-1A subfamily. As to quaternary structure, monomer.

The protein resides in the cytoplasm. The enzyme catalyses GTP + H2O = GDP + phosphate + H(+). GTP hydrolase that promotes the GTP-dependent binding of aminoacyl-tRNA to the A-site of ribosomes during protein biosynthesis. This is Elongation factor Tu from Pseudomonas syringae pv. syringae (strain B728a).